The sequence spans 97 residues: Glutamyl-tRNA(Gln) amidotransferase subunit C 2 (97 aa).

The protein belongs to the GatC family. As to quaternary structure, heterotrimer of A, B and C subunits.

The catalysed reaction is L-glutamyl-tRNA(Gln) + L-glutamine + ATP + H2O = L-glutaminyl-tRNA(Gln) + L-glutamate + ADP + phosphate + H(+). It carries out the reaction L-aspartyl-tRNA(Asn) + L-glutamine + ATP + H2O = L-asparaginyl-tRNA(Asn) + L-glutamate + ADP + phosphate + 2 H(+). In terms of biological role, allows the formation of correctly charged Asn-tRNA(Asn) or Gln-tRNA(Gln) through the transamidation of misacylated Asp-tRNA(Asn) or Glu-tRNA(Gln) in organisms which lack either or both of asparaginyl-tRNA or glutaminyl-tRNA synthetases. The reaction takes place in the presence of glutamine and ATP through an activated phospho-Asp-tRNA(Asn) or phospho-Glu-tRNA(Gln). The chain is Glutamyl-tRNA(Gln) amidotransferase subunit C 2 (gatC2) from Clostridium acetobutylicum (strain ATCC 824 / DSM 792 / JCM 1419 / IAM 19013 / LMG 5710 / NBRC 13948 / NRRL B-527 / VKM B-1787 / 2291 / W).